Consider the following 381-residue polypeptide: MKENEVKDEKSVDVLSFKQLEFQKTVLPQDVFRNELTWFCYEIYKSLAFRIWMLLWLPLSVWWKLSSNWIHPLIVSLLVLFLGPFFVLVICGLSRKRSLSKQLIQFCKEITEDTPSSDPHDWEVVAANLNSYFYENKTWNTKYFFFNAMSCQKAFKTTLLEPFSLKKDESAKVKSFKDSVPYIEEALQVYAAGFDKEWKLFNTEKEESPFDLEDIQLPKEAYRFKLTWILKRIFNLRCLPLFLYYFLIVYTSGNADLISRFLFPVVMFFIMTRDFQNMRMIVLSVKMEHKMQFLSTIINEQESGANGWDEIAKKMNRYLFEKKVWNNEEFFYDGLDCEWFFRRFFYRLLSLKKPMWFASLNVELWPYIKEAQSARNEKPLK.

Residues 1–42 (MKENEVKDEKSVDVLSFKQLEFQKTVLPQDVFRNELTWFCYE) are Extracellular-facing. Residues 43–63 (IYKSLAFRIWMLLWLPLSVWW) traverse the membrane as a helical segment. The Cytoplasmic segment spans residues 64 to 72 (KLSSNWIHP). The chain crosses the membrane as a helical span at residues 73–93 (LIVSLLVLFLGPFFVLVICGL). The Extracellular segment spans residues 94–237 (SRKRSLSKQL…WILKRIFNLR (144 aa)). Residues 238–258 (CLPLFLYYFLIVYTSGNADLI) form a helical membrane-spanning segment. Over 259–381 (SRFLFPVVMF…QSARNEKPLK (123 aa)) the chain is Cytoplasmic.

Belongs to the DUP/COS family.

Its subcellular location is the membrane. The protein is Protein COS8 (COS8) of Saccharomyces cerevisiae (strain ATCC 204508 / S288c) (Baker's yeast).